The following is a 256-amino-acid chain: CD209 antigen-like protein 2 (256 aa).

Topologically, residues Met-1–Ala-50 are cytoplasmic. Positions Leu-14 to Leu-15 match the Endocytosis signal motif. A helical; Signal-anchor for type II membrane protein transmembrane segment spans residues Pro-51–Val-71. Over Gln-72–Glu-240 the chain is Extracellular. Cystine bridges form between Cys-108–Cys-119, Cys-136–Cys-229, and Cys-208–Cys-221. The C-type lectin domain maps to Phe-114–Lys-230. Ca(2+) is bound by residues Glu-199, Asn-201, Ile-203, Glu-206, Asn-217, and Asp-218.

Predominantly expressed in liver and axillary lymph nodes. At very low levels also found in other tissues.

The protein resides in the membrane. Functionally, probable pathogen-recognition receptor involved in peripheral immune surveillance in liver. May mediate the endocytosis of pathogens which are subsequently degraded in lysosomal compartments. Probably recognizes in a calcium-dependent manner high mannose N-linked oligosaccharides in a variety of pathogen antigens. Is a receptor for ICAM3, probably by binding to mannose-like carbohydrates. This is CD209 antigen-like protein 2 (CD209L2) from Macaca mulatta (Rhesus macaque).